We begin with the raw amino-acid sequence, 1370 residues long: Zinc finger MYM-type protein 3 (1370 aa).

Low complexity-rich tracts occupy residues 1–12 (MDPSDFPSPFDP) and 52–61 (PSSGALDLLD). Disordered regions lie at residues 1–72 (MDPS…DPGV) and 90–301 (PSPP…QRAG). Positions 230–253 (ASEKPPERKRSERVRRAEPPKPEV) are enriched in basic and acidic residues. Phosphoserine occurs at positions 263 and 267. Residues 263-279 (SDEDSDAMVDDPNDEDF) show a composition bias toward acidic residues. Glycyl lysine isopeptide (Lys-Gly) (interchain with G-Cter in SUMO2) cross-links involve residues K308, K320, and K328. 9 MYM-type zinc fingers span residues 332–366 (QLFC…TKDS), 378–422 (HEFC…LHEV), 429–464 (HRLC…KTGS), 477–511 (KRFC…FEML), 521–559 (SLFC…PCYY), 567–604 (YQFC…KPEV), 612–646 (FQFC…HEKL), 653–692 (KSFC…GVTE), and 699–733 (WDFC…LETI). S464 carries the post-translational modification Phosphoserine. Over residues 759–794 (NLDTQSGPESLLNSQSPESKPQTPSQTKVENSNTVR) the composition is skewed to polar residues. Residues 759-830 (NLDTQSGPES…PPPPATPRKN (72 aa)) are disordered. Residues K778 and K786 each participate in a glycyl lysine isopeptide (Lys-Gly) (interchain with G-Cter in SUMO2) cross-link. T795 carries the phosphothreonine modification. A Glycyl lysine isopeptide (Lys-Gly) (interchain with G-Cter in SUMO2) cross-link involves residue K804. Residues 815-826 (APTPPPPPPPAT) are compositionally biased toward pro residues. Residues T817 and T826 each carry the phosphothreonine modification. Residues K847, K861, K920, and K1275 each participate in a glycyl lysine isopeptide (Lys-Gly) (interchain with G-Cter in SUMO2) cross-link.

In terms of assembly, may be a component of a BHC histone deacetylase complex that contains HDAC1, HDAC2, HMG20B/BRAF35, KDM1A, RCOR1/CoREST, PHF21A/BHC80, ZMYM2, ZNF217, ZMYM3, GSE1 and GTF2I. As to expression, most abundant in brain, moderate in muscle and heart, low in other tissues except placenta.

It localises to the nucleus. Plays a role in the regulation of cell morphology and cytoskeletal organization. The sequence is that of Zinc finger MYM-type protein 3 (ZMYM3) from Homo sapiens (Human).